The following is a 418-amino-acid chain: Caveolae-associated protein 2 (418 aa).

The tract at residues 1 to 42 (MGEDAAQAEKFQHPNTDMLQEKPSSPSPMPSSTPSPSLNLGS) is disordered. Gly-2 bears the N-acetylglycine mark. The interaction with CAVIN1 stretch occupies residues 2–168 (GEDAAQAEKF…IFQEESEIPA (167 aa)). A phosphoserine mark is found at Ser-27, Ser-35, Ser-37, and Ser-51. Coiled-coil stretches lie at residues 61–87 (LLDKLVNMLDAVRENQHNMEQRQINLE) and 126–268 (RAVR…VERR). A leucine-zipper region spans residues 62-100 (LDKLVNMLDAVRENQHNMEQRQINLEGSVKGIQNDLTKL). Residue Thr-196 is modified to Phosphothreonine. 2 disordered regions span residues 200–238 (VDLSSDDELPRDEEALEDSAEEKMEESRAEKIKRSSLKK) and 262–382 (IVSV…ALQQ). Residues Ser-203, Ser-204, and Ser-218 each carry the phosphoserine modification. The segment covering 203 to 219 (SSDDELPRDEEALEDSA) has biased composition (acidic residues). The segment covering 220–238 (EEKMEESRAEKIKRSSLKK) has biased composition (basic and acidic residues). Over residues 275–287 (LTPNHQKASSGKS) the composition is skewed to polar residues. Phosphoserine is present on residues Ser-283, Ser-284, Ser-287, Ser-288, Ser-293, and Ser-296. The segment covering 303–321 (REGESSVENETKLEDQMQE) has biased composition (basic and acidic residues). 4 positions are modified to phosphoserine: Ser-327, Ser-336, Ser-359, and Ser-363. A compositionally biased stretch (polar residues) spans 355 to 366 (RGNNSAVGSNAD). Thr-368 is subject to Phosphothreonine. Residues 368–377 (TIEEDEEEEP) are compositionally biased toward acidic residues. Residue Tyr-388 is modified to Phosphotyrosine. A phosphoserine mark is found at Ser-390 and Ser-396. A disordered region spans residues 396–418 (SEEMEEPSEKQVQPAVLHVDQTA).

The protein belongs to the CAVIN family. Component of the CAVIN complex composed of CAVIN1, CAVIN2, CAVIN3 and CAVIN4. Binds to PRKCA in the presence of phosphatidylserine. Interacts with CAVIN4; this augments the transactivation of NPPA by CAVIN4. Interacts with CAVIN1. Interacts with CAV3. The N-terminus is blocked. As to expression, heart, adipose tissue, lung and endothelial cells (at protein level). Highly expressed in kidney and expressed at lower levels in liver, spleen, thymus, stomach, intestine and uterus.

The protein resides in the cytoplasm. Its subcellular location is the cytosol. The protein localises to the membrane. It localises to the caveola. Functionally, plays an important role in caveolar biogenesis and morphology. Regulates caveolae morphology by inducing membrane curvature within caveolae. Plays a role in caveola formation in a tissue-specific manner. Required for the formation of caveolae in the lung and fat endothelia but not in the heart endothelia. Negatively regulates the size or stability of CAVIN complexes in the lung endothelial cells. May play a role in targeting PRKCA to caveolae. In Mus musculus (Mouse), this protein is Caveolae-associated protein 2 (Cavin2).